A 421-amino-acid polypeptide reads, in one-letter code: Imidazolonepropionase (421 aa).

Residues His81 and His83 each contribute to the Fe(3+) site. Zn(2+)-binding residues include His81 and His83. 3 residues coordinate 4-imidazolone-5-propanoate: Arg90, Tyr153, and His186. Tyr153 is an N-formimidoyl-L-glutamate binding site. His251 provides a ligand contact to Fe(3+). Residue His251 participates in Zn(2+) binding. Glu254 is a binding site for 4-imidazolone-5-propanoate. Asp326 is a binding site for Fe(3+). Position 326 (Asp326) interacts with Zn(2+). 2 residues coordinate N-formimidoyl-L-glutamate: Asn328 and Gly330. Position 331 (Ser331) interacts with 4-imidazolone-5-propanoate.

Belongs to the metallo-dependent hydrolases superfamily. HutI family. It depends on Zn(2+) as a cofactor. Fe(3+) serves as cofactor.

Its subcellular location is the cytoplasm. It catalyses the reaction 4-imidazolone-5-propanoate + H2O = N-formimidoyl-L-glutamate. It participates in amino-acid degradation; L-histidine degradation into L-glutamate; N-formimidoyl-L-glutamate from L-histidine: step 3/3. In terms of biological role, catalyzes the hydrolytic cleavage of the carbon-nitrogen bond in imidazolone-5-propanoate to yield N-formimidoyl-L-glutamate. It is the third step in the universal histidine degradation pathway. In Streptococcus pyogenes serotype M3 (strain SSI-1), this protein is Imidazolonepropionase.